The following is a 47-amino-acid chain: Large ribosomal subunit protein eL40 (47 aa).

Belongs to the eukaryotic ribosomal protein eL40 family.

The polypeptide is Large ribosomal subunit protein eL40 (Methanococcus maripaludis (strain C5 / ATCC BAA-1333)).